The primary structure comprises 540 residues: Ribonuclease Y (540 aa).

Residues 4-24 traverse the membrane as a helical segment; that stretch reads TILVPVAVAIVSVLVGGCAGY. A KH domain is found at 230 to 293; the sequence is TVSVVNLPND…EIAKRALERL (64 aa). The HD domain occupies 356–449; it reads VLSHSIEVGK…VVAADTISSA (94 aa).

It belongs to the RNase Y family.

It is found in the cell membrane. In terms of biological role, endoribonuclease that initiates mRNA decay. This is Ribonuclease Y from Lactobacillus gasseri (strain ATCC 33323 / DSM 20243 / BCRC 14619 / CIP 102991 / JCM 1131 / KCTC 3163 / NCIMB 11718 / NCTC 13722 / AM63).